A 623-amino-acid chain; its full sequence is Membrane protein insertase YidC (623 aa).

A run of 5 helical transmembrane segments spans residues 8-28 (LILA…LFPP), 379-399 (MGLA…PLAY), 449-469 (LPIL…FVTI), 507-527 (TTMA…SMWL), and 543-563 (IFAW…SGLV). Positions 601–617 (KPAAQPAGKAANDGAAP) are enriched in low complexity. The segment at 601-623 (KPAAQPAGKAANDGAAPAKKRKP) is disordered.

The protein belongs to the OXA1/ALB3/YidC family. Type 1 subfamily. In terms of assembly, interacts with the Sec translocase complex via SecD. Specifically interacts with transmembrane segments of nascent integral membrane proteins during membrane integration.

Its subcellular location is the cell inner membrane. Functionally, required for the insertion and/or proper folding and/or complex formation of integral membrane proteins into the membrane. Involved in integration of membrane proteins that insert both dependently and independently of the Sec translocase complex, as well as at least some lipoproteins. Aids folding of multispanning membrane proteins. In Cereibacter sphaeroides (strain ATCC 17029 / ATH 2.4.9) (Rhodobacter sphaeroides), this protein is Membrane protein insertase YidC.